A 206-amino-acid polypeptide reads, in one-letter code: MARYIGPKCKLSRREGTDLFLKSGVTPFEKKCKSEQIPGVHGQRRQRLSDYGLQLREKQKVRRMYGVLEKQFRNYYKEAARLKGATGELLLQLLESRLDNVVYRMGFGSTRSEARQLVSHKAIAVNGRTVNVASYQVKPGDVVSVREKAKNQARIQNALGIAANRGDVAWIDVDSKKMEGTFKAVPERGDLSADINENLIVELYSK.

Positions 96-157 (SRLDNVVYRM…KAKNQARIQN (62 aa)) constitute an S4 RNA-binding domain.

It belongs to the universal ribosomal protein uS4 family. In terms of assembly, part of the 30S ribosomal subunit. Contacts protein S5. The interaction surface between S4 and S5 is involved in control of translational fidelity.

Functionally, one of the primary rRNA binding proteins, it binds directly to 16S rRNA where it nucleates assembly of the body of the 30S subunit. With S5 and S12 plays an important role in translational accuracy. In Chromohalobacter salexigens (strain ATCC BAA-138 / DSM 3043 / CIP 106854 / NCIMB 13768 / 1H11), this protein is Small ribosomal subunit protein uS4.